The primary structure comprises 893 residues: Translation initiation factor IF-2 (893 aa).

Disordered stretches follow at residues 51–203 (KEHG…AEAE) and 216–299 (EENE…TSMQ). 3 stretches are compositionally biased toward basic and acidic residues: residues 102 to 203 (ALEE…AEAE), 216 to 238 (EENEARWKEEEQKKSAAEKDADY), and 245 to 261 (HAREAEDAADRKEEQQP). The 170-residue stretch at 392–561 (GRAPVVTIMG…LLQSEVLELT (170 aa)) folds into the tr-type G domain. A G1 region spans residues 401-408 (GHVDHGKT). Residue 401–408 (GHVDHGKT) coordinates GTP. Residues 426-430 (GITQH) are G2. Positions 447-450 (DTPG) are G3. GTP-binding positions include 447 to 451 (DTPGH) and 501 to 504 (NKID). The G4 stretch occupies residues 501–504 (NKID). Residues 537-539 (SAK) are G5.

This sequence belongs to the TRAFAC class translation factor GTPase superfamily. Classic translation factor GTPase family. IF-2 subfamily.

It localises to the cytoplasm. In terms of biological role, one of the essential components for the initiation of protein synthesis. Protects formylmethionyl-tRNA from spontaneous hydrolysis and promotes its binding to the 30S ribosomal subunits. Also involved in the hydrolysis of GTP during the formation of the 70S ribosomal complex. The protein is Translation initiation factor IF-2 of Aliivibrio fischeri (strain ATCC 700601 / ES114) (Vibrio fischeri).